A 328-amino-acid chain; its full sequence is Malate dehydrogenase (328 aa).

Position 12 to 18 (12 to 18 (GAAGQIG)) interacts with NAD(+). Positions 95 and 101 each coordinate substrate. NAD(+) is bound by residues Asn-108, Gln-115, and 132–134 (VGN). Substrate-binding residues include Asn-134 and Arg-165. His-190 acts as the Proton acceptor in catalysis.

It belongs to the LDH/MDH superfamily. MDH type 2 family.

It carries out the reaction (S)-malate + NAD(+) = oxaloacetate + NADH + H(+). Functionally, catalyzes the reversible oxidation of malate to oxaloacetate. This is Malate dehydrogenase from Methylibium petroleiphilum (strain ATCC BAA-1232 / LMG 22953 / PM1).